The following is a 248-amino-acid chain: Ribonuclease PH (248 aa).

Phosphate-binding positions include Arg-86 and 124–126 (GTR).

This sequence belongs to the RNase PH family. In terms of assembly, homohexameric ring arranged as a trimer of dimers.

It catalyses the reaction tRNA(n+1) + phosphate = tRNA(n) + a ribonucleoside 5'-diphosphate. Functionally, phosphorolytic 3'-5' exoribonuclease that plays an important role in tRNA 3'-end maturation. Removes nucleotide residues following the 3'-CCA terminus of tRNAs; can also add nucleotides to the ends of RNA molecules by using nucleoside diphosphates as substrates, but this may not be physiologically important. Probably plays a role in initiation of 16S rRNA degradation (leading to ribosome degradation) during starvation. The protein is Ribonuclease PH of Listeria innocua serovar 6a (strain ATCC BAA-680 / CLIP 11262).